We begin with the raw amino-acid sequence, 380 residues long: Chaperone protein DnaJ (380 aa).

The 66-residue stretch at Asp5 to Gly70 folds into the J domain. A CR-type zinc finger spans residues Gly140–Thr218. Residues Cys153, Cys156, Cys170, Cys173, Cys192, Cys195, Cys206, and Cys209 each coordinate Zn(2+). CXXCXGXG motif repeat units lie at residues Cys153–Gly160, Cys170–Gly177, Cys192–Gly199, and Cys206–Gly213.

This sequence belongs to the DnaJ family. In terms of assembly, homodimer. The cofactor is Zn(2+).

The protein localises to the cytoplasm. Functionally, participates actively in the response to hyperosmotic and heat shock by preventing the aggregation of stress-denatured proteins and by disaggregating proteins, also in an autonomous, DnaK-independent fashion. Unfolded proteins bind initially to DnaJ; upon interaction with the DnaJ-bound protein, DnaK hydrolyzes its bound ATP, resulting in the formation of a stable complex. GrpE releases ADP from DnaK; ATP binding to DnaK triggers the release of the substrate protein, thus completing the reaction cycle. Several rounds of ATP-dependent interactions between DnaJ, DnaK and GrpE are required for fully efficient folding. Also involved, together with DnaK and GrpE, in the DNA replication of plasmids through activation of initiation proteins. This chain is Chaperone protein DnaJ, found in Paraburkholderia xenovorans (strain LB400).